The primary structure comprises 256 residues: MALPDFSMRQLLEAGVHFGHQTHRWNPKMAPFIYGERNNIHILDLSQTVPLLNSALKVVSDTVARGGRVLFVGTKRQASDIIADAANRSAQYYVNARWLGGMMTNWKTISNSIQRLRKLDELLAGEAQGFTKKERLNLEREREKLDRALGGIKDMGSVPDLMFIIDTNKEAIAIQEAKRLGIPVVAVIDSNCDPDQIDYPIPGNDDAARAIALYCDLIARAALDGIARQQGAMGIDVGAQVEAPVEPALQAPAEGA.

It belongs to the universal ribosomal protein uS2 family.

This is Small ribosomal subunit protein uS2 from Brucella abortus (strain S19).